The chain runs to 338 residues: Glycerol-3-phosphate dehydrogenase [NAD(P)+] (338 aa).

4 residues coordinate NADPH: serine 14, tyrosine 15, histidine 35, and lysine 109. Sn-glycerol 3-phosphate contacts are provided by lysine 109, glycine 138, and threonine 140. Position 142 (alanine 142) interacts with NADPH. Sn-glycerol 3-phosphate contacts are provided by lysine 194, aspartate 247, serine 257, arginine 258, and asparagine 259. The active-site Proton acceptor is lysine 194. Arginine 258 contacts NADPH. The NADPH site is built by valine 282 and glutamate 284.

Belongs to the NAD-dependent glycerol-3-phosphate dehydrogenase family.

The protein resides in the cytoplasm. It carries out the reaction sn-glycerol 3-phosphate + NAD(+) = dihydroxyacetone phosphate + NADH + H(+). It catalyses the reaction sn-glycerol 3-phosphate + NADP(+) = dihydroxyacetone phosphate + NADPH + H(+). Its pathway is membrane lipid metabolism; glycerophospholipid metabolism. Catalyzes the reduction of the glycolytic intermediate dihydroxyacetone phosphate (DHAP) to sn-glycerol 3-phosphate (G3P), the key precursor for phospholipid synthesis. The protein is Glycerol-3-phosphate dehydrogenase [NAD(P)+] of Shewanella putrefaciens (strain CN-32 / ATCC BAA-453).